Consider the following 450-residue polypeptide: Bifunctional protein GlmU (450 aa).

A pyrophosphorylase region spans residues 1–229 (MGVALIVLAA…EAETLGINTR (229 aa)). Residues 8–11 (LAAG), lysine 22, glutamine 75, 80–81 (GT), 103–105 (YGD), glycine 141, glutamate 155, asparagine 170, and asparagine 227 contribute to the UDP-N-acetyl-alpha-D-glucosamine site. Aspartate 105 contributes to the Mg(2+) binding site. Residue asparagine 227 participates in Mg(2+) binding. Residues 230-250 (TELAAAEQAFQARARARALED) form a linker region. Residues 251–450 (GVTLADPATT…RARKSAKGAQ (200 aa)) are N-acetyltransferase. Residues arginine 316 and lysine 334 each coordinate UDP-N-acetyl-alpha-D-glucosamine. Histidine 346 (proton acceptor) is an active-site residue. UDP-N-acetyl-alpha-D-glucosamine is bound by residues tyrosine 349 and asparagine 360. Acetyl-CoA is bound by residues alanine 363, 369-370 (NY), serine 388, threonine 406, and arginine 423.

In the N-terminal section; belongs to the N-acetylglucosamine-1-phosphate uridyltransferase family. This sequence in the C-terminal section; belongs to the transferase hexapeptide repeat family. As to quaternary structure, homotrimer. Mg(2+) serves as cofactor.

The protein resides in the cytoplasm. It catalyses the reaction alpha-D-glucosamine 1-phosphate + acetyl-CoA = N-acetyl-alpha-D-glucosamine 1-phosphate + CoA + H(+). It carries out the reaction N-acetyl-alpha-D-glucosamine 1-phosphate + UTP + H(+) = UDP-N-acetyl-alpha-D-glucosamine + diphosphate. It participates in nucleotide-sugar biosynthesis; UDP-N-acetyl-alpha-D-glucosamine biosynthesis; N-acetyl-alpha-D-glucosamine 1-phosphate from alpha-D-glucosamine 6-phosphate (route II): step 2/2. The protein operates within nucleotide-sugar biosynthesis; UDP-N-acetyl-alpha-D-glucosamine biosynthesis; UDP-N-acetyl-alpha-D-glucosamine from N-acetyl-alpha-D-glucosamine 1-phosphate: step 1/1. Its pathway is bacterial outer membrane biogenesis; LPS lipid A biosynthesis. Catalyzes the last two sequential reactions in the de novo biosynthetic pathway for UDP-N-acetylglucosamine (UDP-GlcNAc). The C-terminal domain catalyzes the transfer of acetyl group from acetyl coenzyme A to glucosamine-1-phosphate (GlcN-1-P) to produce N-acetylglucosamine-1-phosphate (GlcNAc-1-P), which is converted into UDP-GlcNAc by the transfer of uridine 5-monophosphate (from uridine 5-triphosphate), a reaction catalyzed by the N-terminal domain. In Dinoroseobacter shibae (strain DSM 16493 / NCIMB 14021 / DFL 12), this protein is Bifunctional protein GlmU.